We begin with the raw amino-acid sequence, 232 residues long: Lipoprotein-releasing system ATP-binding protein LolD (232 aa).

Positions 11-231 (VYLHDIKREY…SLENGHVVEL (221 aa)) constitute an ABC transporter domain. 47-54 (APSGSGKS) contributes to the ATP binding site.

Belongs to the ABC transporter superfamily. Lipoprotein translocase (TC 3.A.1.125) family. The complex is composed of two ATP-binding proteins (LolD) and two transmembrane proteins (LolC and LolE).

Its subcellular location is the cell inner membrane. Its function is as follows. Part of the ABC transporter complex LolCDE involved in the translocation of mature outer membrane-directed lipoproteins, from the inner membrane to the periplasmic chaperone, LolA. Responsible for the formation of the LolA-lipoprotein complex in an ATP-dependent manner. In Nitrobacter winogradskyi (strain ATCC 25391 / DSM 10237 / CIP 104748 / NCIMB 11846 / Nb-255), this protein is Lipoprotein-releasing system ATP-binding protein LolD.